A 297-amino-acid polypeptide reads, in one-letter code: tRNA pseudouridine synthase B (297 aa).

The active-site Nucleophile is Asp44.

It belongs to the pseudouridine synthase TruB family. Type 1 subfamily.

The enzyme catalyses uridine(55) in tRNA = pseudouridine(55) in tRNA. Its function is as follows. Responsible for synthesis of pseudouridine from uracil-55 in the psi GC loop of transfer RNAs. In Mycobacterium sp. (strain JLS), this protein is tRNA pseudouridine synthase B.